The sequence spans 161 residues: N5-carboxyaminoimidazole ribonucleotide mutase (161 aa).

Positions 9, 12, and 39 each coordinate substrate.

Belongs to the AIR carboxylase family. Class I subfamily.

It carries out the reaction 5-carboxyamino-1-(5-phospho-D-ribosyl)imidazole + H(+) = 5-amino-1-(5-phospho-D-ribosyl)imidazole-4-carboxylate. Its pathway is purine metabolism; IMP biosynthesis via de novo pathway; 5-amino-1-(5-phospho-D-ribosyl)imidazole-4-carboxylate from 5-amino-1-(5-phospho-D-ribosyl)imidazole (N5-CAIR route): step 2/2. Functionally, catalyzes the conversion of N5-carboxyaminoimidazole ribonucleotide (N5-CAIR) to 4-carboxy-5-aminoimidazole ribonucleotide (CAIR). The polypeptide is N5-carboxyaminoimidazole ribonucleotide mutase (Vibrio cholerae serotype O1 (strain ATCC 39315 / El Tor Inaba N16961)).